The chain runs to 97 residues: Co-chaperonin GroES (97 aa).

The protein belongs to the GroES chaperonin family. Heptamer of 7 subunits arranged in a ring. Interacts with the chaperonin GroEL.

It localises to the cytoplasm. Together with the chaperonin GroEL, plays an essential role in assisting protein folding. The GroEL-GroES system forms a nano-cage that allows encapsulation of the non-native substrate proteins and provides a physical environment optimized to promote and accelerate protein folding. GroES binds to the apical surface of the GroEL ring, thereby capping the opening of the GroEL channel. The polypeptide is Co-chaperonin GroES (Nocardioides sp. (strain ATCC BAA-499 / JS614)).